Here is a 148-residue protein sequence, read N- to C-terminus: Large ribosomal subunit protein bL9 (148 aa).

This sequence belongs to the bacterial ribosomal protein bL9 family.

Binds to the 23S rRNA. This is Large ribosomal subunit protein bL9 from Clostridium perfringens (strain ATCC 13124 / DSM 756 / JCM 1290 / NCIMB 6125 / NCTC 8237 / Type A).